Reading from the N-terminus, the 347-residue chain is NADH-ubiquinone oxidoreductase chain 2 (347 aa).

11 consecutive transmembrane segments (helical) span residues 3–23, 25–45, 59–79, 96–116, 122–142, 149–169, 178–198, 200–220, 237–257, 274–294, and 325–345; these read PPIL…VLTS, HWLT…PILM, YLLT…IDLL, AMMT…FWVP, IHMS…LSIL, INPN…GWGG, ILAY…LYNP, MMIL…MLFM, APLI…LPPL, EMII…YFYM, and LLSP…LLSI.

It belongs to the complex I subunit 2 family. As to quaternary structure, core subunit of respiratory chain NADH dehydrogenase (Complex I) which is composed of 45 different subunits. Interacts with TMEM242.

It is found in the mitochondrion inner membrane. It carries out the reaction a ubiquinone + NADH + 5 H(+)(in) = a ubiquinol + NAD(+) + 4 H(+)(out). Functionally, core subunit of the mitochondrial membrane respiratory chain NADH dehydrogenase (Complex I) which catalyzes electron transfer from NADH through the respiratory chain, using ubiquinone as an electron acceptor. Essential for the catalytic activity and assembly of complex I. This Cynictis penicillata (Yellow mongoose) protein is NADH-ubiquinone oxidoreductase chain 2.